Consider the following 488-residue polypeptide: Probable malate:quinone oxidoreductase (488 aa).

The protein belongs to the MQO family. Requires FAD as cofactor.

It carries out the reaction (S)-malate + a quinone = a quinol + oxaloacetate. It functions in the pathway carbohydrate metabolism; tricarboxylic acid cycle; oxaloacetate from (S)-malate (quinone route): step 1/1. This chain is Probable malate:quinone oxidoreductase, found in Neisseria gonorrhoeae (strain ATCC 700825 / FA 1090).